A 309-amino-acid chain; its full sequence is GTPase Era (309 aa).

Positions 16–186 (HAGFVAIVGK…REQILDALPE (171 aa)) constitute an Era-type G domain. Residues 24–31 (GKPNVGKS) are G1. 24–31 (GKPNVGKS) is a binding site for GTP. Positions 50–54 (QTTRR) are G2. Residues 71–74 (DTPG) are G3. GTP-binding positions include 71–75 (DTPGL) and 133–136 (NKVD). The segment at 133-136 (NKVD) is G4. The G5 stretch occupies residues 164–166 (LSA). The KH type-2 domain occupies 217–294 (LREELPYAVA…FLGLEVIVIP (78 aa)).

The protein belongs to the TRAFAC class TrmE-Era-EngA-EngB-Septin-like GTPase superfamily. Era GTPase family. Monomer.

It localises to the cytoplasm. The protein localises to the cell membrane. Its function is as follows. An essential GTPase that binds both GDP and GTP, with rapid nucleotide exchange. Plays a role in 16S rRNA processing and 30S ribosomal subunit biogenesis and possibly also in cell cycle regulation and energy metabolism. This chain is GTPase Era, found in Deinococcus geothermalis (strain DSM 11300 / CIP 105573 / AG-3a).